The following is an 850-amino-acid chain: Mitogen-activated protein kinase kinase kinase 11 (850 aa).

S11 carries the phosphoserine modification. The disordered stretch occupies residues 16-35 (WNGSGSGGGGGTGGVRPEGS). A compositionally biased stretch (gly residues) spans 17-31 (NGSGSGGGGGTGGVR). S35 is modified (phosphoserine). An SH3 domain is found at 42-106 (YANPVWTALF…PSNYVSRGGG (65 aa)). The region spanning 118-380 (LRLEEVIGIG…ASILQQLEAL (263 aa)) is the Protein kinase domain. Residues 124–132 (IGIGGFGKV) and K145 contribute to the ATP site. D242 serves as the catalytic Proton acceptor. Residue T278 is modified to Phosphothreonine; by autocatalysis. A Phosphoserine; by autocatalysis and MAP4K1 modification is found at S282. A Phosphoserine modification is found at S395. Leucine-zipper stretches follow at residues 404–425 (IQGLFDELRAKEKELLSREEEL) and 439–460 (LRRREHLLAQWELEVFERELTL). S508 and S525 each carry phosphoserine. The interval 535 to 644 (QLEPTESGQT…SSGTPKLIQR (110 aa)) is disordered. Positions 538–547 (PTESGQTWGR) are enriched in polar residues. A phosphoserine mark is found at S549, S556, and S557. Residues 551-563 (RRLEDSSNGERRA) are compositionally biased toward basic and acidic residues. Residues 598-610 (SSPLGSPSTPPAL) are compositionally biased toward low complexity. S655 bears the Phosphoserine mark. The disordered stretch occupies residues 657–850 (GLGRDLQPPG…QAPWAPEAGP (194 aa)). The span at 677-693 (TAPPPAQMPSPCPPELP) shows a compositional bias: pro residues. Polar residues predominate over residues 700 to 711 (LSQTTPDAHSSP). The residue at position 709 (S709) is a Phosphoserine. T712 is subject to Phosphothreonine. Residues S728, S731, S743, S751, S761, S773, S792, S796, and S818 each carry the phosphoserine modification. Residues 763–776 (PLGLISRPRPSPLR) are compositionally biased toward low complexity. Over residues 790-802 (RPSPLPSPQPAPR) the composition is skewed to pro residues. The segment covering 803–819 (RAPWTLFPDSDPFWDSP) has biased composition (low complexity).

Belongs to the protein kinase superfamily. STE Ser/Thr protein kinase family. MAP kinase kinase kinase subfamily. As to quaternary structure, homodimer; undergoes dimerization during activation. Interacts with MAP2K4/MKK4 and MAP2K7/MKK7. Found in a complex with SH3RF1, RAC1, MAP2K7/MKK7, MAPK8IP1/JIP1 and MAPK8/JNK1. The cofactor is Mg(2+). In terms of processing, autophosphorylation on serine and threonine residues within the activation loop plays a role in enzyme activation. Thr-278 is likely to be the main autophosphorylation site. Phosphorylation of Ser-556 and Ser-557 is induced by CDC42.

It is found in the cytoplasm. It localises to the cytoskeleton. The protein resides in the microtubule organizing center. The protein localises to the centrosome. It catalyses the reaction L-seryl-[protein] + ATP = O-phospho-L-seryl-[protein] + ADP + H(+). The enzyme catalyses L-threonyl-[protein] + ATP = O-phospho-L-threonyl-[protein] + ADP + H(+). Homodimerization via the leucine zipper domains is required for autophosphorylation and subsequent activation. Its function is as follows. Activates the JUN N-terminal pathway. Required for serum-stimulated cell proliferation and for mitogen and cytokine activation of MAPK14 (p38), MAPK3 (ERK) and MAPK8 (JNK1) through phosphorylation and activation of MAP2K4/MKK4 and MAP2K7/MKK7. Plays a role in mitogen-stimulated phosphorylation and activation of BRAF, but does not phosphorylate BRAF directly. Influences microtubule organization during the cell cycle. This chain is Mitogen-activated protein kinase kinase kinase 11 (Map3k11), found in Mus musculus (Mouse).